We begin with the raw amino-acid sequence, 250 residues long: Cell division protein ZapD (250 aa).

Belongs to the ZapD family. As to quaternary structure, interacts with FtsZ.

The protein resides in the cytoplasm. Cell division factor that enhances FtsZ-ring assembly. Directly interacts with FtsZ and promotes bundling of FtsZ protofilaments, with a reduction in FtsZ GTPase activity. This is Cell division protein ZapD from Yersinia pseudotuberculosis serotype O:1b (strain IP 31758).